Consider the following 101-residue polypeptide: Large ribosomal subunit protein uL23 (101 aa).

The protein belongs to the universal ribosomal protein uL23 family. As to quaternary structure, part of the 50S ribosomal subunit. Contacts protein L29, and trigger factor when it is bound to the ribosome.

Its function is as follows. One of the early assembly proteins it binds 23S rRNA. One of the proteins that surrounds the polypeptide exit tunnel on the outside of the ribosome. Forms the main docking site for trigger factor binding to the ribosome. The sequence is that of Large ribosomal subunit protein uL23 from Thiobacillus denitrificans (strain ATCC 25259 / T1).